Consider the following 73-residue polypeptide: Translational regulator CsrA (73 aa).

The segment at 54–73 is disordered; it reads ENRAASDSPWSPNSLPQLPV. Polar residues predominate over residues 61–73; sequence SPWSPNSLPQLPV.

The protein belongs to the CsrA/RsmA family. As to quaternary structure, homodimer; the beta-strands of each monomer intercalate to form a hydrophobic core, while the alpha-helices form wings that extend away from the core.

The protein localises to the cytoplasm. A translational regulator that binds mRNA to regulate translation initiation and/or mRNA stability. Usually binds in the 5'-UTR at or near the Shine-Dalgarno sequence preventing ribosome-binding, thus repressing translation. Its main target seems to be the major flagellin gene, while its function is anatagonized by FliW. This Treponema pallidum (strain Nichols) protein is Translational regulator CsrA.